A 774-amino-acid polypeptide reads, in one-letter code: Probable ubiquitin-like-specific protease 2A (774 aa).

Residues 118-141 (SSLSENDEVSTGEATNPASDPHEV) form a disordered region. Catalysis depends on residues histidine 400, aspartate 430, and cysteine 485. The interval 548–568 (ILPANSKSEPPHCGVSNRNDQ) is disordered.

Belongs to the peptidase C48 family.

In terms of biological role, protease that catalyzes two essential functions in the SUMO pathway: processing of full-length SUMOs to their mature forms and deconjugation of SUMO from targeted proteins. This is Probable ubiquitin-like-specific protease 2A (ULP2A) from Arabidopsis thaliana (Mouse-ear cress).